The sequence spans 331 residues: MKVYAAPFEKFVNLADARLGTKILSVTDDWFADANRLFQPTPAVWKEGVFDDNGKWMDGWESRRKRFEGYDSAVIRLGVAGTIKGVDIDTSFFTGNFPPSASLEACFLASGEPDENTAWTEVLPSVELQGNSHHYHEITNDQAFSHLRFNIYPDGGVARLRVYGVPHRDWSKVSEDEQIDLVAALNGGRSIACSDEHYGSMSNILNPGRGVNMGDGWETARRRTPGNDWVIVALGHKGEVEKVIVDTLHFKGNYPDSCSIQGAFVKGGTDSQIETQSLFWRELLPSQKLTMHAEHEFAEQINAIGPITHIRLNVFPDGGVSRLRVLGKVSR.

The protein belongs to the allantoicase family.

It carries out the reaction allantoate + H2O = (S)-ureidoglycolate + urea. It participates in nitrogen metabolism; (S)-allantoin degradation; (S)-ureidoglycolate from allantoate (aminidohydrolase route): step 1/1. The chain is Probable allantoicase from Pseudomonas savastanoi pv. phaseolicola (strain 1448A / Race 6) (Pseudomonas syringae pv. phaseolicola (strain 1448A / Race 6)).